The primary structure comprises 207 residues: Small ribosomal subunit protein uS4c (207 aa).

Residues 92–153 (MRLDNILFRL…PKTYQSILSK (62 aa)) form the S4 RNA-binding domain.

The protein belongs to the universal ribosomal protein uS4 family. As to quaternary structure, part of the 30S ribosomal subunit. Contacts protein S5. The interaction surface between S4 and S5 is involved in control of translational fidelity.

The protein resides in the plastid. It is found in the chloroplast. Its function is as follows. One of the primary rRNA binding proteins, it binds directly to 16S rRNA where it nucleates assembly of the body of the 30S subunit. In terms of biological role, with S5 and S12 plays an important role in translational accuracy. This is Small ribosomal subunit protein uS4c (rps4) from Equisetum hyemale (Dutch rush).